The chain runs to 135 residues: Large ribosomal subunit protein uL16c (135 aa).

This sequence belongs to the universal ribosomal protein uL16 family. As to quaternary structure, part of the 50S ribosomal subunit.

It localises to the plastid. It is found in the chloroplast. The chain is Large ribosomal subunit protein uL16c from Oenothera argillicola (Appalachian evening primrose).